A 196-amino-acid chain; its full sequence is Imidazole glycerol phosphate synthase subunit HisH (196 aa).

One can recognise a Glutamine amidotransferase type-1 domain in the interval 2–196 (NIVIIDTNCS…QQLVKNFLEI (195 aa)). The active-site Nucleophile is the Cys77. Active-site residues include His178 and Glu180.

Heterodimer of HisH and HisF.

The protein localises to the cytoplasm. It catalyses the reaction 5-[(5-phospho-1-deoxy-D-ribulos-1-ylimino)methylamino]-1-(5-phospho-beta-D-ribosyl)imidazole-4-carboxamide + L-glutamine = D-erythro-1-(imidazol-4-yl)glycerol 3-phosphate + 5-amino-1-(5-phospho-beta-D-ribosyl)imidazole-4-carboxamide + L-glutamate + H(+). The catalysed reaction is L-glutamine + H2O = L-glutamate + NH4(+). It functions in the pathway amino-acid biosynthesis; L-histidine biosynthesis; L-histidine from 5-phospho-alpha-D-ribose 1-diphosphate: step 5/9. In terms of biological role, IGPS catalyzes the conversion of PRFAR and glutamine to IGP, AICAR and glutamate. The HisH subunit catalyzes the hydrolysis of glutamine to glutamate and ammonia as part of the synthesis of IGP and AICAR. The resulting ammonia molecule is channeled to the active site of HisF. The polypeptide is Imidazole glycerol phosphate synthase subunit HisH (Blochmanniella pennsylvanica (strain BPEN)).